Reading from the N-terminus, the 271-residue chain is Probable septum site-determining protein MinC (271 aa).

The segment at 106–125 (RRAPSPKAADDAPAQPEEPR) is disordered. Low complexity predominate over residues 110–119 (SPKAADDAPA).

The protein belongs to the MinC family. Interacts with MinD and FtsZ.

Its function is as follows. Cell division inhibitor that blocks the formation of polar Z ring septums. Rapidly oscillates between the poles of the cell to destabilize FtsZ filaments that have formed before they mature into polar Z rings. Prevents FtsZ polymerization. In Burkholderia thailandensis (strain ATCC 700388 / DSM 13276 / CCUG 48851 / CIP 106301 / E264), this protein is Probable septum site-determining protein MinC.